Reading from the N-terminus, the 421-residue chain is Core-capsid bridging protein (421 aa).

Belongs to the adenoviridae core-capsid bridging protein family. As to quaternary structure, monomer. Homodimer. Exists in equilibrium between monomers and dimers in solution. Interacts with the histone-like nucleoprotein; this interactions bridge the virus core to the capsid. Interacts with core protein X; this interactions bridge the virus core to the capsid. Interacts with the endosome lysis protein VI; this interactions bridge the virus core to the capsid. Interacts with the peripentonal hexons. Interacts with host NPM1; this interaction might play a role in virus assembly.

The protein resides in the virion. It localises to the host nucleus. Its subcellular location is the host nucleolus. Associates loosely with the viral DNA to form an outer shell around the nucleoprotein-DNA complex and links it with the capsid by binding the endosome lysis protein. Dissociates from the viral genome during entry. Might be involved in nuclear capsid assembly of the viral particles through its association with NPM1/nucleophosmin. The polypeptide is Core-capsid bridging protein (Canine adenovirus serotype 1 (strain RI261) (CAdV-1)).